The chain runs to 1311 residues: Zinc finger protein 521 (1311 aa).

Residues 1 to 10 (MSRRKQAKPR) show a composition bias toward basic residues. The segment at 1 to 37 (MSRRKQAKPRSLKDPNCKLEDKTEDGEALDCKKRPED) is disordered. The span at 11–21 (SLKDPNCKLED) shows a compositional bias: basic and acidic residues. The C2H2-type 1; degenerate zinc finger occupies 47–67 (HSCDSCLQVFESLSDITEHKI). Residues 81–108 (DPTCSWPASSPSSKDQTSPSHGEGCDFG) are disordered. A compositionally biased stretch (low complexity) spans 87 to 102 (PASSPSSKDQTSPSHG). 7 consecutive C2H2-type zinc fingers follow at residues 118–140 (YPCQFCDKSFSRLSYLKHHEQSH), 146–168 (FKCTYCSRLFKHKRSRDRHIKLH), 174–196 (YHCSECDAAFSRSDHLKIHLKTH), 202–224 (YKCAICRRGFLSSSSLHGHMQVH), 246–269 (QKCSQCEEGFDFPEDLQKHIAECH), 281–304 (LQCVYCHELFVEETSLMNHMEQVH), and 310–332 (NSCSICSESFHTVEELYSHMDSH). Over residues 349–358 (VGYTSVSSTT) the composition is skewed to low complexity. The disordered stretch occupies residues 349-397 (VGYTSVSSTTPDSNLSVDSSTMVEAAPPIPKSRGRKRAAQQTPDMTGPS). Composition is skewed to polar residues over residues 359–370 (PDSNLSVDSSTM) and 387–397 (AQQTPDMTGPS). Residues 405–429 (YSCIYCNKQLFSSLAVLQIHLKTMH) form a C2H2-type 9; degenerate zinc finger. 3 C2H2-type zinc fingers span residues 437–460 (HICQYCLEVLPSLYNLNEHLKQVH), 477–500 (YQCNFCSEVVNDLNTLQEHIRCSH), and 513–536 (FFCPHCYMGFLTDSSLEEHIRQVH). Ser546 is subject to Phosphoserine. A C2H2-type 13; atypical zinc finger spans residues 560 to 585 (YSCSYCTNSPIFNSVLKLNKHIKENH). 2 positions are modified to phosphoserine: Ser605 and Ser608. C2H2-type zinc fingers lie at residues 634-656 (YICNQCGAKYTSLDSFQTHLKTH), 664-686 (LTCPQCNKEFPNQESLLKHVTIH), 694-717 (YICESCDKQFTSVDDLQKHLLDMH), 722-745 (FRCTLCQEVFDSKVSIQLHLAVKH), 752-775 (YRCTSCNWDFRNETDLQLHVKHNH), 783-805 (HKCIFCGESFGTEVELQCHITTH), and 809-832 (YNCKFCSKAFHAIILLEKHLREKH). Positions 863–882 (TNSQESHNSHDGSEEDVDTS) are disordered. A C2H2-type 21; degenerate zinc finger spans residues 886 to 908 (YGCDICGAAYTMETLLQNHQLRD). C2H2-type zinc fingers lie at residues 930–952 (YKCNVCSRTFFSENGLREHMQTH), 959–981 (YMCPICGERFPSLLTLTEHKVTH), and 1020–1042 (FRCVVCMQTVTSTLELKIHGTFH). The C2H2-type 25; degenerate zinc finger occupies 1065–1083 (YKCASCLKEFRSKQDLVKL). The segment at 1138-1161 (TRCSSCNVKFESESELQNHIQTIH) adopts a C2H2-type 26 zinc-finger fold. A Glycyl lysine isopeptide (Lys-Gly) (interchain with G-Cter in SUMO2) cross-link involves residue Lys1146. Polar residues predominate over residues 1168 to 1178 (SNSTQLKTPQV). A disordered region spans residues 1168-1188 (SNSTQLKTPQVSPMPRISPSQ). 4 C2H2-type zinc fingers span residues 1195-1217 (YQCIKCQMVFYNEWDIQVHVANH), 1225-1247 (HECKLCSQTFDSPAKLQCHLIEH), 1256-1279 (FKCPVCFTVFVQANKLQQHIFSAH), and 1286-1309 (YDCTQCPQKFFFQTELQNHTMTQH).

The protein belongs to the krueppel C2H2-type zinc-finger protein family. As to quaternary structure, interacts with EBF1. Interacts with SMAD1 and SMAD4. In terms of tissue distribution, predominantly expressed in hematopoietic cells. Present in organs and tissues that contain stem and progenitor cells, myeloid and/or lymphoid: placenta, spleen, lymph nodes, thymus, bone marrow and fetal liver. Within the hematopoietic system, it is abundant in CD34(+) cells but undetectable in mature peripheral blood leukocytes, and its levels rapidly decrease during the differentiation of CD34(+) cells in response to hemopoietins.

The protein resides in the nucleus. Functionally, transcription factor that can both act as an activator or a repressor depending on the context. Involved in BMP signaling and in the regulation of the immature compartment of the hematopoietic system. Associates with SMADs in response to BMP2 leading to activate transcription of BMP target genes. Acts as a transcriptional repressor via its interaction with EBF1, a transcription factor involved specification of B-cell lineage; this interaction preventing EBF1 to bind DNA and activate target genes. The sequence is that of Zinc finger protein 521 (ZNF521) from Homo sapiens (Human).